We begin with the raw amino-acid sequence, 246 residues long: tRNA (guanine-N(1)-)-methyltransferase (246 aa).

Residues G117 and 137-142 each bind S-adenosyl-L-methionine; that span reads IGDYVL.

Belongs to the RNA methyltransferase TrmD family. As to quaternary structure, homodimer.

It localises to the cytoplasm. It carries out the reaction guanosine(37) in tRNA + S-adenosyl-L-methionine = N(1)-methylguanosine(37) in tRNA + S-adenosyl-L-homocysteine + H(+). Functionally, specifically methylates guanosine-37 in various tRNAs. The chain is tRNA (guanine-N(1)-)-methyltransferase from Acinetobacter baumannii (strain SDF).